A 72-amino-acid polypeptide reads, in one-letter code: Seed trypsin/chymotrypsin inhibitor IVB (72 aa).

7 disulfide bridges follow: Cys8–Cys61, Cys9–Cys24, Cys12–Cys57, Cys14–Cys22, Cys31–Cys38, Cys35–Cys50, and Cys40–Cys48.

This sequence belongs to the Bowman-Birk serine protease inhibitor family. In terms of tissue distribution, seed.

In terms of biological role, inhibitor of trypsin and of chymotrypsin. May function as a natural phytochemical defense against predators. This Pisum sativum (Garden pea) protein is Seed trypsin/chymotrypsin inhibitor IVB.